The chain runs to 216 residues: Octanoyltransferase (216 aa).

The BPL/LPL catalytic domain maps to 31 to 205 (STTRDEVWLV…ELVTLLDYEQ (175 aa)). Residues 70–77 (RGGQVTYH), 137–139 (SLG), and 150–152 (GLA) contribute to the substrate site. Cys168 functions as the Acyl-thioester intermediate in the catalytic mechanism.

The protein belongs to the LipB family.

Its subcellular location is the cytoplasm. The enzyme catalyses octanoyl-[ACP] + L-lysyl-[protein] = N(6)-octanoyl-L-lysyl-[protein] + holo-[ACP] + H(+). It participates in protein modification; protein lipoylation via endogenous pathway; protein N(6)-(lipoyl)lysine from octanoyl-[acyl-carrier-protein]: step 1/2. Catalyzes the transfer of endogenously produced octanoic acid from octanoyl-acyl-carrier-protein onto the lipoyl domains of lipoate-dependent enzymes. Lipoyl-ACP can also act as a substrate although octanoyl-ACP is likely to be the physiological substrate. The sequence is that of Octanoyltransferase from Vibrio cholerae serotype O1 (strain ATCC 39541 / Classical Ogawa 395 / O395).